The primary structure comprises 428 residues: Chaperone SurA (428 aa).

An N-terminal signal peptide occupies residues 1–13 (MLGALLLSGAVHA). 2 consecutive PpiC domains span residues 164–265 (SEEF…KLLE) and 276–375 (RDEV…EVLG). The segment at 211–230 (TSSSSENALEGGDMGWRKAA) is disordered.

The protein localises to the periplasm. The catalysed reaction is [protein]-peptidylproline (omega=180) = [protein]-peptidylproline (omega=0). Its function is as follows. Chaperone involved in the correct folding and assembly of outer membrane proteins. Recognizes specific patterns of aromatic residues and the orientation of their side chains, which are found more frequently in integral outer membrane proteins. May act in both early periplasmic and late outer membrane-associated steps of protein maturation. In Pseudomonas syringae pv. syringae (strain B728a), this protein is Chaperone SurA.